We begin with the raw amino-acid sequence, 441 residues long: uncharacterized protein (441 aa).

12 helical membrane-spanning segments follow: residues 21–41 (VVVALTFSAIVGGLVAGMSLG), 51–71 (LGGGATIALSYAMLGTFAVAI), 94–114 (AASTTGLKYAVLVALVLVTMS), 118–138 (VIPVHIAFIPILIPPLLGVFA), 150–170 (VLTFGLITPYMVLPVGFGGIF), 195–215 (AMLLPGAGMIFGLLLAIFVSY), 239–259 (QHILVAALGIIAALGVQLYTG), 260–280 (SMIIGALAGFMVFTFGGVIAW), 291–311 (VHMMAMIGFIMIAAAGFAAVM), 334–354 (LAALLMLVVGLLVTMGIGSSF), 363–383 (IYVPLSLAFGFSPMATIALVG), and 419–439 (VVPTFIHYNIPLIIFGWIAAM).

It localises to the cell membrane. This is an uncharacterized protein from Vibrio parahaemolyticus serotype O3:K6 (strain RIMD 2210633).